A 567-amino-acid polypeptide reads, in one-letter code: Urease subunit alpha (567 aa).

One can recognise a Urease domain in the interval 129–567 (GGVDSHIHFI…LPLAQRYFLF (439 aa)). The Ni(2+) site is built by His-134, His-136, and Lys-217. Lys-217 is subject to N6-carboxylysine. Position 219 (His-219) interacts with substrate. The Ni(2+) site is built by His-246 and His-272. The active-site Proton donor is His-320. Asp-360 provides a ligand contact to Ni(2+).

The protein belongs to the metallo-dependent hydrolases superfamily. Urease alpha subunit family. As to quaternary structure, heterotrimer of UreA (gamma), UreB (beta) and UreC (alpha) subunits. Three heterotrimers associate to form the active enzyme. Requires Ni cation as cofactor. Post-translationally, carboxylation allows a single lysine to coordinate two nickel ions.

The protein localises to the cytoplasm. It catalyses the reaction urea + 2 H2O + H(+) = hydrogencarbonate + 2 NH4(+). It participates in nitrogen metabolism; urea degradation; CO(2) and NH(3) from urea (urease route): step 1/1. This chain is Urease subunit alpha, found in Pseudomonas putida (strain ATCC 700007 / DSM 6899 / JCM 31910 / BCRC 17059 / LMG 24140 / F1).